The sequence spans 331 residues: 2-isopropylmalate synthase (331 aa).

The Pyruvate carboxyltransferase domain maps to 1-80; it reads RDEVVRGRDV…YTRINTREIY (80 aa). Positions 15, 17, and 51 each coordinate Mn(2+). The interval 205-331 is regulatory domain; the sequence is QLEHVQFFSG…PSIEEVHRGV (127 aa).

It belongs to the alpha-IPM synthase/homocitrate synthase family. LeuA type 1 subfamily. Homotetramer. The cofactor is Mn(2+).

Its subcellular location is the cytoplasm. The catalysed reaction is 3-methyl-2-oxobutanoate + acetyl-CoA + H2O = (2S)-2-isopropylmalate + CoA + H(+). It functions in the pathway amino-acid biosynthesis; L-leucine biosynthesis; L-leucine from 3-methyl-2-oxobutanoate: step 1/4. In terms of biological role, catalyzes the condensation of the acetyl group of acetyl-CoA with 3-methyl-2-oxobutanoate (2-oxoisovalerate) to form 3-carboxy-3-hydroxy-4-methylpentanoate (2-isopropylmalate). The polypeptide is 2-isopropylmalate synthase (Thermus thermophilus).